A 192-amino-acid chain; its full sequence is Holliday junction branch migration complex subunit RuvA (192 aa).

Positions 1-61 (MFEYLKGIVA…DTGITLYGFL (61 aa)) are domain I. Positions 62 to 137 (SLEDKELFLK…KLGDYVKKSA (76 aa)) are domain II. A flexible linker region spans residues 137-140 (AVAT). Positions 141-192 (DLTPSLQDALLALVALGYTQKEVDRITPKLAKLPENTADGYIKEALALLLKK) are domain III.

It belongs to the RuvA family. In terms of assembly, homotetramer. Forms an RuvA(8)-RuvB(12)-Holliday junction (HJ) complex. HJ DNA is sandwiched between 2 RuvA tetramers; dsDNA enters through RuvA and exits via RuvB. An RuvB hexamer assembles on each DNA strand where it exits the tetramer. Each RuvB hexamer is contacted by two RuvA subunits (via domain III) on 2 adjacent RuvB subunits; this complex drives branch migration. In the full resolvosome a probable DNA-RuvA(4)-RuvB(12)-RuvC(2) complex forms which resolves the HJ.

It localises to the cytoplasm. Functionally, the RuvA-RuvB-RuvC complex processes Holliday junction (HJ) DNA during genetic recombination and DNA repair, while the RuvA-RuvB complex plays an important role in the rescue of blocked DNA replication forks via replication fork reversal (RFR). RuvA specifically binds to HJ cruciform DNA, conferring on it an open structure. The RuvB hexamer acts as an ATP-dependent pump, pulling dsDNA into and through the RuvAB complex. HJ branch migration allows RuvC to scan DNA until it finds its consensus sequence, where it cleaves and resolves the cruciform DNA. In Lactobacillus gasseri (strain ATCC 33323 / DSM 20243 / BCRC 14619 / CIP 102991 / JCM 1131 / KCTC 3163 / NCIMB 11718 / NCTC 13722 / AM63), this protein is Holliday junction branch migration complex subunit RuvA.